We begin with the raw amino-acid sequence, 859 residues long: Leucine--tRNA ligase (859 aa).

Residues 42-52 (PYPSGRLHMGH) carry the 'HIGH' region motif. A 'KMSKS' region motif is present at residues 618–622 (KMSKS). ATP is bound at residue Lys621.

It belongs to the class-I aminoacyl-tRNA synthetase family.

It is found in the cytoplasm. It carries out the reaction tRNA(Leu) + L-leucine + ATP = L-leucyl-tRNA(Leu) + AMP + diphosphate. This chain is Leucine--tRNA ligase, found in Shewanella sp. (strain W3-18-1).